Here is a 142-residue protein sequence, read N- to C-terminus: HTH-type transcriptional regulator MntR (142 aa).

The HTH dtxR-type domain maps to 1–63 (MPTPSMEDYI…YEKYRGLILT (63 aa)). Mn(2+) contacts are provided by Asp-8, Glu-11, His-77, Glu-99, Glu-102, and His-103.

The protein belongs to the DtxR/MntR family. Homodimer.

The protein localises to the cytoplasm. With respect to regulation, DNA binding is strongly activated by Mn(2+). Its function is as follows. Central regulator of manganese homeostasis. The chain is HTH-type transcriptional regulator MntR from Listeria monocytogenes serotype 4b (strain F2365).